The following is an 80-amino-acid chain: RNA-binding protein Hfq (80 aa).

The 61-residue stretch at Asp-10–Ile-70 folds into the Sm domain.

Belongs to the Hfq family. In terms of assembly, homohexamer.

Functionally, RNA chaperone that binds small regulatory RNA (sRNAs) and mRNAs to facilitate mRNA translational regulation in response to envelope stress, environmental stress and changes in metabolite concentrations. Also binds with high specificity to tRNAs. The protein is RNA-binding protein Hfq of Clostridium perfringens (strain SM101 / Type A).